A 256-amino-acid polypeptide reads, in one-letter code: Zinc import ATP-binding protein ZnuC 1 (256 aa).

Residues 5-220 (LTLQDVCVVF…PKYIALFGQQ (216 aa)) enclose the ABC transporter domain. 37-44 (GPNGAGKS) is an ATP binding site. A disordered region spans residues 232-256 (HHHNHDLSGEPSDGSCCSKNKKAHQ).

It belongs to the ABC transporter superfamily. Zinc importer (TC 3.A.1.15.5) family. In terms of assembly, the complex is composed of two ATP-binding proteins (ZnuC), two transmembrane proteins (ZnuB) and a solute-binding protein (ZnuA).

The protein localises to the cell inner membrane. It carries out the reaction Zn(2+)(out) + ATP(in) + H2O(in) = Zn(2+)(in) + ADP(in) + phosphate(in) + H(+)(in). In terms of biological role, part of the ABC transporter complex ZnuABC involved in zinc import. Responsible for energy coupling to the transport system. The sequence is that of Zinc import ATP-binding protein ZnuC 1 from Aliivibrio fischeri (strain ATCC 700601 / ES114) (Vibrio fischeri).